Reading from the N-terminus, the 172-residue chain is Shikimate kinase (172 aa).

Residue 11–16 (GAGKST) participates in ATP binding. Ser15 contributes to the Mg(2+) binding site. Positions 33, 57, and 79 each coordinate substrate. Arg117 lines the ATP pocket. Arg136 is a binding site for substrate. Arg153 is a binding site for ATP.

The protein belongs to the shikimate kinase family. In terms of assembly, monomer. Mg(2+) serves as cofactor.

The protein resides in the cytoplasm. It catalyses the reaction shikimate + ATP = 3-phosphoshikimate + ADP + H(+). Its pathway is metabolic intermediate biosynthesis; chorismate biosynthesis; chorismate from D-erythrose 4-phosphate and phosphoenolpyruvate: step 5/7. Functionally, catalyzes the specific phosphorylation of the 3-hydroxyl group of shikimic acid using ATP as a cosubstrate. The chain is Shikimate kinase from Pseudomonas fluorescens (strain Pf0-1).